Consider the following 235-residue polypeptide: MASSQPPLPPPPPPLLLLALLLLLKVSDTSSSVSTATSTASETDNLTSKPLTSSFSSSSPTVWEKQTSQEKPETASTSHPDSSSSESTISHSPSNSGTTSTTQPTSSQPEPDTHPSSGSPSSEHTVTSPSLGSVSLATLPWSPTHPKPSTGPPSVSLATTDRTFETSGYAPGDSGVPRLHRNPGVVVAVCLLVSALLIGGAIMAVRRCHNGVSEFQKLDEGLVSRRSSSAHHTLP.

A signal peptide spans 1–31; that stretch reads MASSQPPLPPPPPPLLLLALLLLLKVSDTSS. Composition is skewed to low complexity over residues 28 to 61 and 76 to 110; these read DTSS…SSPT and STSH…SQPE. Residues 28–159 form a disordered region; sequence DTSSSVSTAT…TGPPSVSLAT (132 aa). The Extracellular segment spans residues 32–184; it reads SVSTATSTAS…GVPRLHRNPG (153 aa). Residue Asn-45 is glycosylated (N-linked (GlcNAc...) asparagine). Positions 114 to 136 are enriched in polar residues; the sequence is HPSSGSPSSEHTVTSPSLGSVSL. Residues 185-205 traverse the membrane as a helical segment; it reads VVVAVCLLVSALLIGGAIMAV. Over 206-235 the chain is Cytoplasmic; that stretch reads RRCHNGVSEFQKLDEGLVSRRSSSAHHTLP.

Highly expressed in large intestine, small intestine, rumen, and kidney tissues.

It localises to the membrane. The protein is Protein CIST1 (CIST1) of Bos taurus (Bovine).